Here is a 569-residue protein sequence, read N- to C-terminus: Pyruvate decarboxylase (569 aa).

Pyruvate is bound by residues D38 and H124. Thiamine diphosphate-binding positions include T398 and 421-423; that span reads GSI. D451 serves as a coordination point for Mg(2+). Thiamine diphosphate-binding positions include 452 to 453 and 478 to 483; these read GS and NQGYTI. 2 residues coordinate Mg(2+): N478 and G480. E484 provides a ligand contact to pyruvate.

Belongs to the TPP enzyme family. Homotetramer. Mg(2+) serves as cofactor. Thiamine diphosphate is required as a cofactor.

It catalyses the reaction a 2-oxocarboxylate + H(+) = an aldehyde + CO2. The catalysed reaction is pyruvate + H(+) = acetaldehyde + CO2. The protein is Pyruvate decarboxylase (pdcA) of Aspergillus terreus (strain NIH 2624 / FGSC A1156).